The sequence spans 478 residues: Cysteine protease ATG4B (478 aa).

A compositionally biased stretch (polar residues) spans 1 to 15; that stretch reads MTSLPDRGVSSSSSD. Residues 1–20 are disordered; sequence MTSLPDRGVSSSSSDPLCEG. C164 (nucleophile) is an active-site residue. Active-site residues include D361 and H363.

Belongs to the peptidase C54 family. In terms of assembly, interacts with ATG8. Constitutively expressed.

Its subcellular location is the cytoplasm. It carries out the reaction [protein]-C-terminal L-amino acid-glycyl-phosphatidylethanolamide + H2O = [protein]-C-terminal L-amino acid-glycine + a 1,2-diacyl-sn-glycero-3-phosphoethanolamine. Its function is as follows. Cysteine protease that plays a key role in autophagy by mediating both proteolytic activation and delipidation of ATG8 family proteins. The protease activity is required for proteolytic activation of ATG8 family proteins: cleaves the C-terminal amino acid of ATG8 proteins to reveal a C-terminal glycine. Exposure of the glycine at the C-terminus is essential for ATG8 proteins conjugation to phosphatidylethanolamine (PE) and insertion to membranes, which is necessary for autophagy. In addition to the protease activity, also mediates delipidation of PE-conjugated ATG8 proteins. The sequence is that of Cysteine protease ATG4B (ATG4B) from Oryza sativa subsp. indica (Rice).